Here is a 664-residue protein sequence, read N- to C-terminus: Probable 3',5'-cyclic phosphodiesterase pde-1 (664 aa).

2 disordered regions span residues 24-60 (TSSA…SIKI) and 113-142 (RNQK…KSYD). 2 stretches are compositionally biased toward basic and acidic residues: residues 28-38 (SEEHGDSDKKL) and 114-130 (NQKE…EKEP). The PDEase domain occupies 256–634 (VQCPIPPEIA…AHWKERAAKE (379 aa)). The active-site Proton donor is the His333. His337, His373, Asp374, and Asp480 together coordinate a divalent metal cation. Disordered stretches follow at residues 564–597 (DSLF…TSPS) and 630–664 (RAAK…VTTN). Over residues 630-644 (RAAKEEEERKIKEAA) the composition is skewed to basic and acidic residues.

It belongs to the cyclic nucleotide phosphodiesterase family. Interacts with cmd-1 in the presence of Ca(2+). A divalent metal cation serves as cofactor. In terms of tissue distribution, expressed in AFD thermosensory neurons.

The enzyme catalyses a nucleoside 3',5'-cyclic phosphate + H2O = a nucleoside 5'-phosphate + H(+). Functionally, redundantly with pde-5, plays a role in the AFD thermosensory neurons to regulate microvilli receptive ending morphology, possibly by regulating cGMP levels. The chain is Probable 3',5'-cyclic phosphodiesterase pde-1 (pde-1) from Caenorhabditis elegans.